Reading from the N-terminus, the 448-residue chain is Probable glycine dehydrogenase (decarboxylating) subunit 1 (448 aa).

Belongs to the GcvP family. N-terminal subunit subfamily. The glycine cleavage system is composed of four proteins: P, T, L and H. In this organism, the P 'protein' is a heterodimer of two subunits.

The catalysed reaction is N(6)-[(R)-lipoyl]-L-lysyl-[glycine-cleavage complex H protein] + glycine + H(+) = N(6)-[(R)-S(8)-aminomethyldihydrolipoyl]-L-lysyl-[glycine-cleavage complex H protein] + CO2. Its function is as follows. The glycine cleavage system catalyzes the degradation of glycine. The P protein binds the alpha-amino group of glycine through its pyridoxal phosphate cofactor; CO(2) is released and the remaining methylamine moiety is then transferred to the lipoamide cofactor of the H protein. This is Probable glycine dehydrogenase (decarboxylating) subunit 1 from Bacillus pumilus (strain SAFR-032).